Consider the following 823-residue polypeptide: Adhesion G protein-coupled receptor E2 (823 aa).

Residues 1 to 23 (MGGRVFLVFLAFCVWLTLPGAET) form the signal peptide. The Extracellular portion of the chain corresponds to 24-540 (QDSRGCARWC…EEDPVLTVIT (517 aa)). Residues 25–66 (DSRGCARWCPQDSSCVNATACRCNPGFSSFSEIITTPMETCD) form the EGF-like 1 domain. 15 disulfides stabilise this stretch: cysteine 29–cysteine 39, cysteine 33–cysteine 45, cysteine 47–cysteine 65, cysteine 71–cysteine 85, cysteine 79–cysteine 94, cysteine 96–cysteine 117, cysteine 123–cysteine 136, cysteine 130–cysteine 145, cysteine 147–cysteine 161, cysteine 167–cysteine 180, cysteine 174–cysteine 189, cysteine 191–cysteine 210, cysteine 216–cysteine 229, cysteine 223–cysteine 238, and cysteine 240–cysteine 259. Asparagine 41 carries N-linked (GlcNAc...) asparagine glycosylation. One can recognise an EGF-like 2; calcium-binding domain in the interval 67–118 (DINECATLSKVSCGKFSDCWNTEGSYDCVCSPGYEPVSGAKTFKNESENTCQ). A glycan (N-linked (GlcNAc...) asparagine) is linked at asparagine 111. Residues 119–162 (DVDECQQNPRLCKSYGTCVNTLGSYTCQCLPGFKLKPEDPKLCT) enclose the EGF-like 3; calcium-binding domain. The EGF-like 4; calcium-binding domain maps to 163–211 (DVNECTSGQNPCHSSTHCLNNVGSYQCRCRPGWQPIPGSPNGPNNTVCE). An N-linked (GlcNAc...) asparagine glycan is attached at asparagine 206. One can recognise an EGF-like 5; calcium-binding domain in the interval 212–260 (DVDECSSGQHQCDSSTVCFNTVGSYSCRCRPGWKPRHGIPNNQKDTVCE). N-linked (GlcNAc...) asparagine glycans are attached at residues asparagine 298, asparagine 347, asparagine 354, asparagine 456, and asparagine 460. The GAIN-B domain occupies 354-530 (NFSYPAGTEL…AVLMAHYDVQ (177 aa)). 2 disulfides stabilise this stretch: cysteine 482-cysteine 512 and cysteine 500-cysteine 514. The GPS stretch occupies residues 482-530 (CVFWEHGQNGCGHWATTGCSTIGTRDTSTICRCTHLSSFAVLMAHYDVQ). Residues 541 to 561 (YMGLSVSLLCLLLAALTFLLC) form a helical membrane-spanning segment. Topologically, residues 562 to 569 (KAIQNTST) are cytoplasmic. Residues 570–590 (SLHLQLSLCLFLAHLLFLVAI) traverse the membrane as a helical segment. At 591–605 (DQTGHKVLCSIIAGT) the chain is on the extracellular side. Residues 606-626 (LHYLYLATLTWMLLEALYLFL) traverse the membrane as a helical segment. The Cytoplasmic portion of the chain corresponds to 627–644 (TARNLTVVNYSSINRFMK). The helical transmembrane segment at 645-665 (KLMFPVGYGVPAVTVAISAAS) threads the bilayer. Over 666-683 (RPHLYGTPSRCWLQPEKG) the chain is Extracellular. The helical transmembrane segment at 684 to 704 (FIWGFLGPVCAIFSVNLVLFL) threads the bilayer. Residues 705–735 (VTLWILKNRLSSLNSEVSTLRNTRMLAFKAT) lie on the Cytoplasmic side of the membrane. Residues 736 to 756 (AQLFILGCTWCLGILQVGPAA) traverse the membrane as a helical segment. Residues 757-760 (RVMA) are Extracellular-facing. A helical transmembrane segment spans residues 761–781 (YLFTIINSLQGVFIFLVYCLL). Over 782–823 (SQQVREQYGKWSKGIRKLKTESEMHTLSSSAKADTSKPSTVN) the chain is Cytoplasmic.

Belongs to the G-protein coupled receptor 2 family. Adhesion G-protein coupled receptor (ADGR) subfamily. As to quaternary structure, forms a heterodimer, consisting of a large extracellular region non-covalently linked to a seven-transmembrane moiety. Interacts with chondroitin sulfate; the interaction with chondroitin sulfate is calcium-dependent. Interacts with CD55. Post-translationally, autoproteolytically cleaved into 2 subunits, an extracellular alpha subunit and a seven-transmembrane beta subunit. As to expression, expression is restricted to myeloid cells. Highest expression was found in peripheral blood leukocytes, followed by spleen and lymph nodes, with intermediate to low levels in thymus, bone marrow, fetal liver, placenta, and lung, and no expression in heart, brain, skeletal muscle, kidney, or pancreas. Expression is also detected in monocyte/macrophage and Jurkat cell lines but not in other cell lines tested. High expression in mast cells.

Its subcellular location is the cell membrane. It localises to the cell projection. The protein localises to the ruffle membrane. Functionally, cell surface receptor that binds to the chondroitin sulfate moiety of glycosaminoglycan chains and promotes cell attachment. Promotes granulocyte chemotaxis, degranulation and adhesion. In macrophages, promotes the release of inflammatory cytokines, including IL8 and TNF. Signals probably through G-proteins. Is a regulator of mast cell degranulation. The chain is Adhesion G protein-coupled receptor E2 from Homo sapiens (Human).